A 218-amino-acid chain; its full sequence is MPRERLLSHGAKSLSNTELLAILINTGRKGFSSIDISNELLKSASNLNELKKSSINDLIKVKGIGLQKAITLKAAFELGERMGRRAENNRIKITQPSDVADYMIPTMKDLTQEHFVILLLNSKNVVIKETCVFKGTLNSSIVHPREIFSIAVRENANAIIAVHNHPSGDVTPSQEDIITTMRLKECGLILGIDLLDHIIIGDNRFTSLVEAGYFDEND.

In terms of domain architecture, MPN spans 92-214; that stretch reads KITQPSDVAD…FTSLVEAGYF (123 aa). Residues His163, His165, and Asp176 each coordinate Zn(2+). Positions 163–176 match the JAMM motif motif; that stretch reads HNHPSGDVTPSQED.

The protein belongs to the UPF0758 family.

The sequence is that of UPF0758 protein SAUSA300_1608 from Staphylococcus aureus (strain USA300).